A 96-amino-acid polypeptide reads, in one-letter code: Large ribosomal subunit protein eL43 (96 aa).

Positions 41, 44, 59, and 62 each coordinate Zn(2+). Residues 41–62 (CPVCAFPKLKRAGTSIWVCEKC) form a C4-type zinc finger.

It belongs to the eukaryotic ribosomal protein eL43 family. Putative zinc-binding subfamily. As to quaternary structure, part of the 50S ribosomal subunit. Zn(2+) is required as a cofactor.

Binds to the 23S rRNA. In Methanococcus maripaludis (strain DSM 14266 / JCM 13030 / NBRC 101832 / S2 / LL), this protein is Large ribosomal subunit protein eL43.